A 401-amino-acid chain; its full sequence is MKFKAIVSLSLAVSMSLFPFLVEAASNDGVESPKTVSEINVSHEKGAYVQGEVIVQFKEQVNAEEKAKALKEVGATAVPDNDRVKSKFNVLKVGNVEAVVKALNNNPLVEYAEPNYLFNAAWTPNDTYYQGYQYGPQNTYTDYAWDVTKGSSGQEIAVIDTGVDYTHPDLDGKVIKGYDFVDNDYDPMDLNNHGTHVAGIAAAETNNATGIAGMAPNTRILAVRALDRNGSGTLSDIADAIIYAADSGAEVINLSLGCDCHTTTLENAVNYAWNKGSVVVAAAGNNGSSTTFEPASYENVIAVGAVDQYDRLASFSNYGTWVDVVAPGVDIVSTITGNRYAYMSGTSMASPHVAGLAALLASQGRNNIEIRQAIEQTADKISGTGTYFKYGRINSYNAVTY.

Positions 1–24 (MKFKAIVSLSLAVSMSLFPFLVEA) are cleaved as a signal peptide. The propeptide occupies 25-121 (ASNDGVESPK…AEPNYLFNAA (97 aa)). Asp126 is a binding site for Ca(2+). One can recognise a Peptidase S8 domain in the interval 133–399 (QYGPQNTYTD…YGRINSYNAV (267 aa)). Catalysis depends on Asp160, which acts as the Charge relay system. Residues Pro168, Asp169, Asp171, Asp179, Asp184, and Asp186 each contribute to the Ca(2+) site. The Charge relay system role is filled by His193. Ca(2+) contacts are provided by Glu204, Asn207, Thr209, and Ile211. A disulfide bridge links Cys258 with Cys260. Na(+)-binding residues include Tyr297, Val300, and Asp323. Ser347 serves as the catalytic Charge relay system.

Belongs to the peptidase S8 family. The cofactor is Ca(2+). Na(+) serves as cofactor.

The protein localises to the secreted. The sequence is that of Thermophilic serine proteinase from Bacillus sp. (strain AK1).